Reading from the N-terminus, the 547-residue chain is CAP-Gly domain-containing linker protein 3 (547 aa).

Residues 1-49 (MTKTDPAPMAPPPRGEEEEEEEEDEPVPEAPSPTQERRQKPVVHPSAPA) form a disordered region. The segment covering 16 to 27 (EEEEEEEEDEPV) has biased composition (acidic residues). ANK repeat units follow at residues 117-158 (TDMT…LRSR), 160-191 (TNMNALHYAAYFDVPDLVRVLLKGARPRVVNS), and 197-229 (NHGSALHIAASSLCLGAAKCLLEHGANPALRNR). The CAP-Gly 1 domain maps to 314–356 (GTTEFASGQWVGVELDEPEGKNDGSVGGVRYFICPPKQGLFAS). Positions 365–413 (DAPPSSVTSTPRTPRMDFSRVTGKGRREHKGKKKTPSSPSLGSLQQRDG) are disordered. The span at 367–377 (PPSSVTSTPRT) shows a compositional bias: low complexity. Position 374 is a phosphothreonine (T374). The segment covering 387 to 399 (GKGRREHKGKKKT) has biased composition (basic residues). Over residues 400-410 (PSSPSLGSLQQ) the composition is skewed to polar residues. S401 carries the phosphoserine modification. The 43-residue stretch at 436 to 478 (GKTDFAPGYWYGIELDQPTGKHDGSVFGVRYFTCPPRHGVFAP) folds into the CAP-Gly 2 domain. Positions 488–547 (STDSPGDSVGAKKVHQVTMTQPKRTFTTVRTPKDIASENSISRLLFCCWFPWMLRAEMQS) are goLD. 2 S-palmitoyl cysteine lipidation sites follow: C534 and C535.

As to quaternary structure, homodimer. Interacts with AKT1 and AKT2; when AKT1 and AKT2 are phosphorylated and activated, affinity is higher for AKT2. Interacts with ZDHHC13 (via ANK repeats). Interacts with ZDHHC17 (via ANK repeats). Post-translationally, palmitoylation by ZDHHC17 regulates association with the plasma membrane.

It is found in the cell membrane. It localises to the cytoplasm. Its subcellular location is the golgi apparatus. The protein localises to the golgi stack. Its function is as follows. Functions as a cytoplasmic linker protein. Involved in TGN-endosome dynamics. May modulate the cellular compartmentalization of AKT kinase family and promote its cell membrane localization, thereby playing a role in glucose transport in adipocytes. The sequence is that of CAP-Gly domain-containing linker protein 3 (CLIP3) from Homo sapiens (Human).